A 466-amino-acid polypeptide reads, in one-letter code: A-type ATP synthase subunit B (466 aa).

Belongs to the ATPase alpha/beta chains family. As to quaternary structure, has multiple subunits with at least A(3), B(3), C, D, E, F, H, I and proteolipid K(x).

It is found in the cell membrane. In terms of biological role, component of the A-type ATP synthase that produces ATP from ADP in the presence of a proton gradient across the membrane. The B chain is a regulatory subunit. This is A-type ATP synthase subunit B from Metallosphaera sedula (strain ATCC 51363 / DSM 5348 / JCM 9185 / NBRC 15509 / TH2).